The sequence spans 356 residues: Vacuolar protein sorting-associated protein 26 (356 aa).

Residues 301–356 form a disordered region; that stretch reads MRRPGTEDDEEEKQTTSIPGTQKFTAPAPVEHPKPESPRSDPKSGSTSPDDNSDSS. Positions 315 to 324 are enriched in polar residues; it reads TTSIPGTQKF. Over residues 331 to 342 the composition is skewed to basic and acidic residues; sequence EHPKPESPRSDP.

Belongs to the VPS26 family.

Its function is as follows. May play a role in vesicular protein sorting, similar to the yeast retromer proteins. In Caenorhabditis elegans, this protein is Vacuolar protein sorting-associated protein 26 (vps-26).